The primary structure comprises 384 residues: Histidinol-phosphate aminotransferase 1 (384 aa).

At Lys233 the chain carries N6-(pyridoxal phosphate)lysine.

It belongs to the class-II pyridoxal-phosphate-dependent aminotransferase family. Histidinol-phosphate aminotransferase subfamily. Homodimer. It depends on pyridoxal 5'-phosphate as a cofactor.

The catalysed reaction is L-histidinol phosphate + 2-oxoglutarate = 3-(imidazol-4-yl)-2-oxopropyl phosphate + L-glutamate. It functions in the pathway amino-acid biosynthesis; L-histidine biosynthesis; L-histidine from 5-phospho-alpha-D-ribose 1-diphosphate: step 7/9. This Thiobacillus denitrificans (strain ATCC 25259 / T1) protein is Histidinol-phosphate aminotransferase 1.